The chain runs to 386 residues: L-lactate dehydrogenase (386 aa).

Positions 1 to 380 (MIISASTDYR…TSDSLVQVTQ (380 aa)) constitute an FMN hydroxy acid dehydrogenase domain. Y24 is a binding site for substrate. FMN is bound by residues S106 and Q127. Y129 provides a ligand contact to substrate. Residue T155 participates in FMN binding. Substrate is bound at residue R164. FMN is bound at residue K251. Catalysis depends on H275, which acts as the Proton acceptor. A substrate-binding site is contributed by R278. 306–330 (DSGIRSGLDVVRMIALGADGVMLGR) contributes to the FMN binding site.

Belongs to the FMN-dependent alpha-hydroxy acid dehydrogenase family. FMN is required as a cofactor.

The protein resides in the cell inner membrane. The catalysed reaction is (S)-lactate + A = pyruvate + AH2. Its function is as follows. Catalyzes the conversion of L-lactate to pyruvate. Is coupled to the respiratory chain. The polypeptide is L-lactate dehydrogenase (Pectobacterium atrosepticum (strain SCRI 1043 / ATCC BAA-672) (Erwinia carotovora subsp. atroseptica)).